A 292-amino-acid polypeptide reads, in one-letter code: Fat storage-inducing transmembrane protein 1 (292 aa).

Residues 1 to 18 are Lumenal-facing; the sequence is MERGPTVGAGLGAGTRVR. The helical transmembrane segment at 19–39 threads the bilayer; the sequence is ALLGCLVKVLLWVASALLYFG. Topologically, residues 40–54 are cytoplasmic; that stretch reads SEQAARLLGSPCLRR. The chain crosses the membrane as a helical span at residues 55–75; the sequence is LYHAWLAAVVIFGPLLQFHVN. Residues 76–94 are Lumenal-facing; that stretch reads SRTIFASHGNFFNIKFVNS. A helical transmembrane segment spans residues 95–115; the sequence is AWGWTCTFLGGFVLLVVFLAT. Residues 116 to 141 are Cytoplasmic-facing; that stretch reads RRVAVTARHLSRLVVGAAVWRGAGRA. Residues 142 to 162 form a helical membrane-spanning segment; the sequence is FLLIEDLTGSCFEPLPQGLLL. At 163-187 the chain is on the lumenal side; sequence HELPDRKSCLAAGHQWRGYTVSSHT. Histidine 186 is a catalytic residue. Residues 188–208 form a helical membrane-spanning segment; it reads FLLTFCCLLMAEEAAVFAKYL. Residues 209-220 lie on the Cytoplasmic side of the membrane; the sequence is AHGLPAGAPLRL. Residues 221-241 traverse the membrane as a helical segment; it reads VFLLNVLLLGLWNFLLLCTVI. Topologically, residues 242 to 249 are lumenal; sequence YFHQYTHK. The active site involves histidine 244. Residues 250–270 form a helical membrane-spanning segment; sequence VVGAAVGTFAWYLTYGSWYHQ. Over 271–292 the chain is Cytoplasmic; that stretch reads PWSPGIPGHGLFPRSRSMRKHN.

This sequence belongs to the FIT family. FIT1 subfamily. In terms of tissue distribution, predominantly expressed in skeletal muscle and at lower levels in the heart (at protein level). In the heart, mRNA expression levels do not correlate well with protein levels, suggesting post-transcriptional regulation in this organ.

The protein localises to the endoplasmic reticulum membrane. Functionally, plays an important role in the formation of lipid droplets (LDs) which are storage organelles at the center of lipid and energy homeostasis. Directly binds to diacylglycerol (DAGs) and triacylglycerol. This Mus musculus (Mouse) protein is Fat storage-inducing transmembrane protein 1.